The sequence spans 272 residues: Isoprenyl transferase (272 aa).

Asp32 is an active-site residue. Mg(2+) is bound at residue Asp32. Substrate-binding positions include 33–36, Trp37, Arg45, His49, and 77–79; these read GNGR and STE. The active-site Proton acceptor is the Asn80. Residues Trp81, Arg83, Arg200, and 206–208 each bind substrate; that span reads RIS. A Mg(2+)-binding site is contributed by Glu219.

Belongs to the UPP synthase family. Homodimer. The cofactor is Mg(2+).

In terms of biological role, catalyzes the condensation of isopentenyl diphosphate (IPP) with allylic pyrophosphates generating different type of terpenoids. This chain is Isoprenyl transferase, found in Prochlorococcus marinus subsp. pastoris (strain CCMP1986 / NIES-2087 / MED4).